A 435-amino-acid chain; its full sequence is 5-hydroxybenzimidazole synthase (435 aa).

Residues Met-95, Tyr-124, His-163, 186–188 (SKG), 227–230 (NGLR), and Glu-266 contribute to the substrate site. His-270 is a binding site for Zn(2+). Substrate is bound at residue Tyr-293. His-334 contributes to the Zn(2+) binding site. [4Fe-4S] cluster contacts are provided by Cys-410, Cys-413, and Cys-417.

The protein belongs to the ThiC family. 5-hydroxybenzimidazole synthase subfamily. As to quaternary structure, homodimer. It depends on [4Fe-4S] cluster as a cofactor.

It catalyses the reaction 5-amino-1-(5-phospho-beta-D-ribosyl)imidazole + AH2 + S-adenosyl-L-methionine = 5-hydroxybenzimidazole + 5'-deoxyadenosine + formate + L-methionine + A + NH4(+) + phosphate + 2 H(+). Functionally, catalyzes the conversion of aminoimidazole ribotide (AIR) to 5-hydroxybenzimidazole (5-HBI) in a radical S-adenosyl-L-methionine (SAM)-dependent reaction. Is thus involved in the anaerobic biosynthesis of the benzimidazole lower axial ligand of the cobamide produced by G.metallireducens. This Geobacter metallireducens (strain ATCC 53774 / DSM 7210 / GS-15) protein is 5-hydroxybenzimidazole synthase.